A 313-amino-acid chain; its full sequence is Beta-ketoacyl-[acyl-carrier-protein] synthase III (313 aa).

Residues Cys112 and His238 contribute to the active site. The segment at 239-243 is ACP-binding; the sequence is QANIR. Asn268 is an active-site residue.

The protein belongs to the thiolase-like superfamily. FabH family. Homodimer.

Its subcellular location is the cytoplasm. The catalysed reaction is malonyl-[ACP] + acetyl-CoA + H(+) = 3-oxobutanoyl-[ACP] + CO2 + CoA. It functions in the pathway lipid metabolism; fatty acid biosynthesis. Its function is as follows. Catalyzes the condensation reaction of fatty acid synthesis by the addition to an acyl acceptor of two carbons from malonyl-ACP. Catalyzes the first condensation reaction which initiates fatty acid synthesis and may therefore play a role in governing the total rate of fatty acid production. Possesses both acetoacetyl-ACP synthase and acetyl transacylase activities. Its substrate specificity determines the biosynthesis of branched-chain and/or straight-chain of fatty acids. The protein is Beta-ketoacyl-[acyl-carrier-protein] synthase III of Staphylococcus aureus (strain COL).